Here is a 120-residue protein sequence, read N- to C-terminus: MIVGIGVDLVSVRRMQQLLERFGNRFTTRAFSEVEIRDSLQYKNAHAVARHFAKRFAAKEAYVKAVGLGFGRGIEMRGVSVFNDALGKPRIAVSGDVGHNVELSLSDDGEYAIAFVVLHV.

Residues Asp8 and Glu60 each contribute to the Mg(2+) site.

Belongs to the P-Pant transferase superfamily. AcpS family. Requires Mg(2+) as cofactor.

The protein localises to the cytoplasm. It catalyses the reaction apo-[ACP] + CoA = holo-[ACP] + adenosine 3',5'-bisphosphate + H(+). Functionally, transfers the 4'-phosphopantetheine moiety from coenzyme A to a Ser of acyl-carrier-protein. In Anaplasma marginale (strain Florida), this protein is Holo-[acyl-carrier-protein] synthase.